Here is a 713-residue protein sequence, read N- to C-terminus: Methionine--tRNA ligase (713 aa).

The 'HIGH' region signature appears at 31 to 41 (PYANGSIHLGH). Zn(2+) contacts are provided by Cys162, Cys165, Cys175, and Cys178. A 'KMSKS' region motif is present at residues 348–352 (KMSKS). Residue Lys351 coordinates ATP. Residues 609–713 (DFAKIDLRIV…DGAKAGMRVK (105 aa)) enclose the tRNA-binding domain.

It belongs to the class-I aminoacyl-tRNA synthetase family. MetG type 1 subfamily. In terms of assembly, homodimer. The cofactor is Zn(2+).

Its subcellular location is the cytoplasm. The enzyme catalyses tRNA(Met) + L-methionine + ATP = L-methionyl-tRNA(Met) + AMP + diphosphate. In terms of biological role, is required not only for elongation of protein synthesis but also for the initiation of all mRNA translation through initiator tRNA(fMet) aminoacylation. This is Methionine--tRNA ligase from Colwellia psychrerythraea (strain 34H / ATCC BAA-681) (Vibrio psychroerythus).